A 655-amino-acid polypeptide reads, in one-letter code: p-hydroxybenzoic acid efflux pump subunit AaeB (655 aa).

A run of 11 helical transmembrane segments spans residues 13 to 33 (FAVKLATAIVLALFVGFHFQL), 38 to 58 (WAVLTAAIVAAGPAFAAGGEP), 69 to 89 (LRIIGTFIGCIAGLVIIIAMI), 93 to 113 (LLMILVCCIWAGFCTWISSLV), 121 to 141 (WGLAGYTALIIVITIQPEPLL), 152 to 172 (EIVIGIVCAIMADLLFSPRSI), 370 to 390 (LFWLWTGWTSGSGAMVMIAVV), 407 to 427 (FIYGTLAALPLGLLYFLVIIP), 431 to 451 (QSMLLLCISLAVLGFFLGIEV), 459 to 479 (MGALASTINIIVLDNPMTFHF), and 482 to 502 (FLDSALGQIVGCVLAFTVILL).

The protein belongs to the aromatic acid exporter ArAE (TC 2.A.85) family.

The protein resides in the cell inner membrane. Its function is as follows. Forms an efflux pump with AaeA. Could function as a metabolic relief valve, allowing to eliminate certain compounds when they accumulate to high levels in the cell. This chain is p-hydroxybenzoic acid efflux pump subunit AaeB, found in Escherichia coli O7:K1 (strain IAI39 / ExPEC).